The sequence spans 316 residues: Leucine-rich repeat-containing protein 73 (316 aa).

LRR repeat units follow at residues 57–78, 86–106, 114–137, 145–166, 174–187, 202–223, and 231–250; these read SLAQ…KQLA, SIQS…ALLN, ALVA…CGLL, GLKE…SRLA, QVRV…PLGD, TLEV…TLLD, and ALRS…QQQI. Residues 257 to 296 form a disordered region; the sequence is GEEEEEMAGGAADTQEWGRGREPAAHQRGGSSWKCPSDPN. Residues 272 to 281 show a composition bias toward basic and acidic residues; sequence EWGRGREPAA.

The polypeptide is Leucine-rich repeat-containing protein 73 (Lrrc73) (Rattus norvegicus (Rat)).